Reading from the N-terminus, the 2220-residue chain is Non-reducing polyketide synthase stbA (2220 aa).

An N-terminal acylcarrier protein transacylase domain (SAT) region spans residues 10 to 255 (IFSPQNSPPK…HDATNTDMAQ (246 aa)). The Ketosynthase family 3 (KS3) domain maps to 379-803 (SDAIAVVGAG…GSNSALICSE (425 aa)). Active-site for beta-ketoacyl synthase activity residues include Cys551, His687, and His726. The interval 906 to 1207 (LAFSGQSRTN…ADATQHTFQA (302 aa)) is malonyl-CoA:ACP transacylase (MAT) domain. Ser993 functions as the For acyl/malonyl transferase activity in the catalytic mechanism. The interval 1287–1414 (EPRAAQLVRY…GDFTMTAGPH (128 aa)) is N-terminal hotdog fold. In terms of domain architecture, PKS/mFAS DH spans 1287–1589 (EPRAAQLVRY…FHKTSMTKLL (303 aa)). The interval 1292-1588 (QLVRYKGALG…HFHKTSMTKL (297 aa)) is product template (PT) domain. His1323 functions as the Proton acceptor; for dehydratase activity in the catalytic mechanism. The segment at 1436-1589 (DAEKLRKRTA…FHKTSMTKLL (154 aa)) is C-terminal hotdog fold. Asp1500 functions as the Proton donor; for dehydratase activity in the catalytic mechanism. 2 consecutive Carrier domains span residues 1634-1711 (AAGP…SGGA) and 1742-1821 (PAGP…AADV). 2 positions are modified to O-(pantetheine 4'-phosphoryl)serine: Ser1671 and Ser1779. Residues 1879–2210 (TRFRMETVVY…YDFIFTELEN (332 aa)) form a thioesterase (TE) domain region. Residues Ser1999 and Asp2148 each act as for thioesterase activity in the active site.

The enzyme catalyses 3 malonyl-CoA + acetyl-CoA + 2 H(+) = orsellinate + 3 CO2 + 4 CoA. It functions in the pathway secondary metabolite biosynthesis; terpenoid biosynthesis. Its function is as follows. Non-reducing polyketide synthase; part of the cluster that mediates the biosynthesis of LL-Z1272-beta, also known as ilicicolin B, a prenylated aryl-aldehyde produced by several fungi and that serves as a key pathway intermediate for many fungal meroterpenoids. The first step in the pathway is performed by the non-reducing polyketide synthase stbA that produces orsellinic acid by condensing acetyl-CoA with 3 malonyl-CoA units. The prenyltransferase stbC then prenylates orsenilic acid into grifolic acid. Finally, grifolic acid is reduced to ilicicolin B by the NRPS-like protein stbB. The protein is Non-reducing polyketide synthase stbA of Stachybotrys bisbyi (Hyalostachybotrys bisbyi).